The chain runs to 260 residues: Snake venom serine protease gussurobin (260 aa).

An N-terminal signal peptide occupies residues 1–18 (MVLIRVLANLLILQLSYA). A propeptide spanning residues 19-24 (QKSSEL) is cleaved from the precursor. A Peptidase S1 domain is found at 25 to 251 (IIGGDECNIN…YTEWIQSTIA (227 aa)). Cystine bridges form between Cys-31/Cys-165, Cys-52/Cys-68, Cys-100/Cys-258, Cys-144/Cys-212, Cys-176/Cys-191, and Cys-202/Cys-227. Catalysis depends on charge relay system residues His-67 and Asp-112. Asn-123 and Asn-124 each carry an N-linked (GlcNAc...) asparagine glycan. Ser-206 (charge relay system) is an active-site residue.

This sequence belongs to the peptidase S1 family. Snake venom subfamily. As to quaternary structure, monomer. As to expression, expressed by the venom gland.

It localises to the secreted. Its function is as follows. Snake venom serine protease that may act in the hemostasis system of the prey. This is Snake venom serine protease gussurobin from Gloydius ussuriensis (Ussuri mamushi).